Reading from the N-terminus, the 141-residue chain is HTH-type transcriptional repressor NsrR (141 aa).

An HTH rrf2-type domain is found at 2 to 129; that stretch reads QLTNFTDYGL…DNYTLADLVE (128 aa). A DNA-binding region (H-T-H motif) is located at residues 28–51; that stretch reads ISEVTDVYGVSRNHMVKIINQLSR. [2Fe-2S] cluster-binding residues include cysteine 91, cysteine 96, and cysteine 102.

Requires [2Fe-2S] cluster as cofactor.

In terms of biological role, nitric oxide-sensitive repressor of genes involved in protecting the cell against nitrosative stress. May require iron for activity. This is HTH-type transcriptional repressor NsrR from Shigella boydii serotype 18 (strain CDC 3083-94 / BS512).